The chain runs to 222 residues: 7-cyano-7-deazaguanine synthase (222 aa).

11-21 (FSGGQDSTTCL) lines the ATP pocket. Positions 187, 195, 198, and 201 each coordinate Zn(2+).

It belongs to the QueC family. The cofactor is Zn(2+).

The enzyme catalyses 7-carboxy-7-deazaguanine + NH4(+) + ATP = 7-cyano-7-deazaguanine + ADP + phosphate + H2O + H(+). The protein operates within purine metabolism; 7-cyano-7-deazaguanine biosynthesis. Functionally, catalyzes the ATP-dependent conversion of 7-carboxy-7-deazaguanine (CDG) to 7-cyano-7-deazaguanine (preQ(0)). The sequence is that of 7-cyano-7-deazaguanine synthase from Actinobacillus pleuropneumoniae serotype 7 (strain AP76).